A 1461-amino-acid polypeptide reads, in one-letter code: Calmodulin-regulated spectrin-associated protein 2 (1461 aa).

Positions P211–E324 constitute a Calponin-homology (CH) domain. A disordered region spans residues R361–S389. Low complexity-rich tracts occupy residues D362–S371 and S380–S389. A phosphoserine mark is found at S391 and S393. The residue at position 401 (T401) is a Phosphothreonine. 5 positions are modified to phosphoserine: S439, S572, S573, S585, and S647. Disordered regions lie at residues S573–S613 and A639–L704. T652 carries the phosphothreonine modification. S654 is modified (phosphoserine). The segment covering S654–S673 has biased composition (low complexity). Over residues Q677–G687 the composition is skewed to basic and acidic residues. Residues L730 to M767 adopt a coiled-coil conformation. Over residues R787 to M826 the composition is skewed to basic and acidic residues. The segment at R787–E855 is disordered. S836 is subject to Phosphoserine. The stretch at E861–Q900 forms a coiled coil. The interval M896–G1007 is MBD region. Residues S905 and S910 each carry the phosphoserine modification. 5 disordered regions span residues R921–S992, V1004–E1044, N1069–P1090, D1102–Q1124, and K1163–G1321. The segment covering S926–P937 has biased composition (low complexity). Residues S943 to P962 are compositionally biased toward polar residues. 3 positions are modified to phosphothreonine: T970, T975, and T977. S981 and S992 each carry phosphoserine. A compositionally biased stretch (basic and acidic residues) spans E1011 to E1028. Pro residues predominate over residues T1077–A1089. 2 stretches are compositionally biased toward basic and acidic residues: residues K1104–Q1124 and K1163–I1224. A Phosphoserine modification is found at S1120. The stretch at K1138–R1210 forms a coiled coil. Positions S1259 to S1271 are enriched in polar residues. 3 positions are modified to phosphoserine: S1285, S1291, and S1293. Polar residues predominate over residues N1306–E1318. The 135-residue stretch at G1321 to K1455 folds into the CKK domain.

The protein belongs to the CAMSAP1 family. Interacts with CAMSAP3. Interacts with KATNA1 and KATNB1; leading to regulate the length of CAMSAP2-decorated microtubule stretches. Interacts with a complex formed by AKAP9 and PDE4DIP isoform 2/MMG8/SMYLE, which recruits CAMSAP2 to the Golgi. Interacts with MAPRE1/EB1.

The protein resides in the cytoplasm. It localises to the cytoskeleton. The protein localises to the golgi apparatus. It is found in the cilium basal body. In terms of biological role, key microtubule-organizing protein that specifically binds the minus-end of non-centrosomal microtubules and regulates their dynamics and organization. Specifically recognizes growing microtubule minus-ends and autonomously decorates and stabilizes microtubule lattice formed by microtubule minus-end polymerization. Acts on free microtubule minus-ends that are not capped by microtubule-nucleating proteins or other factors and protects microtubule minus-ends from depolymerization. In addition, it also reduces the velocity of microtubule polymerization. Through the microtubule cytoskeleton, also regulates the organization of cellular organelles including the Golgi and the early endosomes. Essential for the tethering, but not for nucleation of non-centrosomal microtubules at the Golgi: together with Golgi-associated proteins AKAP9 and PDE4DIP, required to tether non-centrosomal minus-end microtubules to the Golgi, an important step for polarized cell movement. Also acts as a regulator of neuronal polarity and development: localizes to non-centrosomal microtubule minus-ends in neurons and stabilizes non-centrosomal microtubules, which is required for neuronal polarity, axon specification and dendritic branch formation. Through the microtubule cytoskeleton, regulates the autophagosome transport. The polypeptide is Calmodulin-regulated spectrin-associated protein 2 (Mus musculus (Mouse)).